Consider the following 586-residue polypeptide: Putative ABC transporter ATP-binding protein MG187 homolog (586 aa).

Residues 13–464 (IEFKNIVVDF…PANEFVATFL (452 aa)) form the ABC transporter domain. 45-52 (GPSGCGKT) contacts ATP.

This sequence belongs to the ABC transporter superfamily.

The chain is Putative ABC transporter ATP-binding protein MG187 homolog from Mycoplasma pneumoniae (strain ATCC 29342 / M129 / Subtype 1) (Mycoplasmoides pneumoniae).